Here is a 262-residue protein sequence, read N- to C-terminus: tRNA U34 carboxymethyltransferase (262 aa).

Carboxy-S-adenosyl-L-methionine contacts are provided by residues lysine 25, tryptophan 39, lysine 44, glycine 63, 114 to 115 (VE), tyrosine 135, and arginine 250.

The protein belongs to the class I-like SAM-binding methyltransferase superfamily. CmoB family. As to quaternary structure, homotetramer.

It carries out the reaction carboxy-S-adenosyl-L-methionine + 5-hydroxyuridine(34) in tRNA = 5-carboxymethoxyuridine(34) in tRNA + S-adenosyl-L-homocysteine + H(+). Catalyzes carboxymethyl transfer from carboxy-S-adenosyl-L-methionine (Cx-SAM) to 5-hydroxyuridine (ho5U) to form 5-carboxymethoxyuridine (cmo5U) at position 34 in tRNAs. This Helicobacter acinonychis (strain Sheeba) protein is tRNA U34 carboxymethyltransferase.